A 675-amino-acid chain; its full sequence is Anosmin-1 (675 aa).

The signal sequence occupies residues 1-21; that stretch reads MVRRAPGASLALLLWVTAVSG. 5 disulfides stabilise this stretch: cysteine 43/cysteine 77, cysteine 47/cysteine 71, cysteine 80/cysteine 99, cysteine 84/cysteine 95, and cysteine 110/cysteine 114. Asparagine 65 carries an N-linked (GlcNAc...) asparagine glycan. One can recognise a WAP domain in the interval 121–170; that stretch reads LSVKQGDCPAPEKASGFAAACVESCEADSECSGVKKCCSNGCGHTCQVPK. Fibronectin type-III domains are found at residues 180 to 281, 286 to 392, 418 to 515, and 545 to 652; these read PRKE…SKDP, APSN…TAQD, RRKP…FFVT, and KPEN…DLPP. N-linked (GlcNAc...) asparagine glycans are attached at residues asparagine 203 and asparagine 294. Over residues 388 to 402 the composition is skewed to polar residues; that stretch reads STAQDNRNNNEQTSA. The interval 388-413 is disordered; it reads STAQDNRNNNEQTSAGKPPKGLVDPY. N-linked (GlcNAc...) asparagine glycosylation is found at asparagine 465, asparagine 548, and asparagine 559. The tract at residues 654–675 is disordered; the sequence is LPHRPHLKQHHPHHYKPPPEKY. A compositionally biased stretch (basic residues) spans 656–669; the sequence is HRPHLKQHHPHHYK.

Mainly expressed in neurons of the central nervous system during the second half of embryonic life. Expressed in mitral neurons of the olfactory bulbs, striatal neurons, Purkinje cells of the cerebellum, retinal neurons and neurons of the brainstem and spinal cord.

It localises to the cell surface. In terms of biological role, may be an adhesion-like molecule with anti-protease activity. The sequence is that of Anosmin-1 from Gallus gallus (Chicken).